A 234-amino-acid chain; its full sequence is Adenosine 5'-phosphosulfate reductase (234 aa).

The [4Fe-4S] cluster site is built by Cys120, Cys121, Cys203, and Cys206. Residue Cys229 is the Nucleophile; cysteine thiosulfonate intermediate of the active site.

This sequence belongs to the PAPS reductase family. CysH subfamily. [4Fe-4S] cluster serves as cofactor.

The protein localises to the cytoplasm. The catalysed reaction is [thioredoxin]-disulfide + sulfite + AMP + 2 H(+) = adenosine 5'-phosphosulfate + [thioredoxin]-dithiol. The protein operates within sulfur metabolism; hydrogen sulfide biosynthesis; sulfite from sulfate. In terms of biological role, catalyzes the formation of sulfite from adenosine 5'-phosphosulfate (APS) using thioredoxin as an electron donor. The protein is Adenosine 5'-phosphosulfate reductase of Bacillus thuringiensis (strain Al Hakam).